We begin with the raw amino-acid sequence, 212 residues long: uncharacterized protein (212 aa).

Belongs to the mimivirus R683/R861 family.

This is an uncharacterized protein from Acanthamoeba polyphaga (Amoeba).